The primary structure comprises 671 residues: Gametogenetin-binding protein 2-like (671 aa).

2 disordered regions span residues 372–489 (REQK…ARVQ) and 532–562 (VRDS…SEVS). Basic residues predominate over residues 373 to 384 (EQKKLKKKKKKD). The segment covering 385–395 (EKKNLLHRQCD) has biased composition (basic and acidic residues). Over residues 396 to 420 (DTEANESDEEEEELRNEELDLEEES) the composition is skewed to acidic residues. The segment covering 455–472 (TKSKPKKQSKKKKQKKAA) has biased composition (basic residues). Polar residues-rich tracts occupy residues 476 to 486 (MGNQKQMQATA) and 546 to 557 (GSRTSSAISSPE).

In Drosophila melanogaster (Fruit fly), this protein is Gametogenetin-binding protein 2-like.